The following is a 605-amino-acid chain: Inactive LRR receptor-like serine/threonine-protein kinase BIR2 (605 aa).

Positions 1-28 are cleaved as a signal peptide; sequence MKEIGSKPRKLLPLCFIIFLCFCSSVMA. Topologically, residues 29-229 are extracellular; the sequence is ADEDDIRCLR…CGGLSKKNLG (201 aa). N58 carries an N-linked (GlcNAc...) asparagine glycan. 4 LRR repeats span residues 101-125, 127-150, 152-173, and 174-197; these read CASL…LCNW, PFLV…LAKC, FVNS…QFSA, and LGRL…FFSS. Residues 230–250 form a helical membrane-spanning segment; sequence IIIAAGVFGAAASMLLAFGIW. Residues 251-605 are Cytoplasmic-facing; that stretch reads WYYHLKWTRR…IFDTQENEKV (355 aa). The residue at position 271 (S271) is a Phosphoserine; by BAK1. Position 283 is a phosphothreonine; by BAK1 (T283). Position 286 is a phosphoserine; by BAK1 (S286). Position 304 is a phosphothreonine; by BAK1 (T304). Positions 307–578 constitute a Protein kinase domain; the sequence is FNSENIIVST…FQAYQSLKAI (272 aa). 313-321 is a binding site for ATP; the sequence is IVSTRTGTT. S330 is subject to Phosphoserine; by BAK1. K335 lines the ATP pocket. S389 carries the phosphoserine; by BAK1 modification. T402 is modified (phosphothreonine). Phosphoserine; by BAK1 is present on residues S448 and S462. Position 466 is a phosphothreonine; by BAK1 (T466). At Y479 the chain carries Phosphotyrosine. The residue at position 482 (T482) is a Phosphothreonine. Position 486 is a phosphoserine (S486). T533 carries the post-translational modification Phosphothreonine; by BAK1.

This sequence belongs to the protein kinase superfamily. Ser/Thr protein kinase family. Interacts constitutively with BAK1, when phosphorylated, thereby preventing interaction with the ligand-binding LRR-RLK FLS2. Upon infection, pathogen-associated molecular patterns (PAMP) perception leads to BIR2 release from the BAK1 complex and enables the recruitment of BAK1 into the FLS2 complex. Phosphorylated by BAK1, this interacts promotes interaction with BAK1.

It localises to the cell membrane. Its function is as follows. Pseudokinases lacking protein kinase activity and unable to bind ATP-analogs. Negative regulator of pathogen-associated molecular patterns- (PAMP-) triggered immunity by limiting BAK1-receptor complex formation in the absence of ligands. This is Inactive LRR receptor-like serine/threonine-protein kinase BIR2 from Arabidopsis thaliana (Mouse-ear cress).